An 85-amino-acid chain; its full sequence is Large ribosomal subunit protein bL31B (85 aa).

This sequence belongs to the bacterial ribosomal protein bL31 family. Type B subfamily. Part of the 50S ribosomal subunit.

In Micrococcus luteus (strain ATCC 4698 / DSM 20030 / JCM 1464 / CCM 169 / CCUG 5858 / IAM 1056 / NBRC 3333 / NCIMB 9278 / NCTC 2665 / VKM Ac-2230) (Micrococcus lysodeikticus), this protein is Large ribosomal subunit protein bL31B.